The following is a 257-amino-acid chain: Transcription factor GHD7 (257 aa).

Ser-68 carries the phosphoserine; by CK1 modification. Residues 190–232 (REAKLMRYKEKRKKRCYEKQIRYASRKAYAEMRPRVRGRFAKE) enclose the CCT domain. The short motif at 198–204 (KEKRKKR) is the Nuclear localization signal element. The disordered stretch occupies residues 226-245 (RGRFAKEPDQEAVAPPSTYV).

As to quaternary structure, interacts with HD16/EL1. Post-translationally, phosphorylated at Ser-68 by HD16/EL1, a casein kinase 1. As to expression, expressed in the apical meristem, developing leaves, leaf sheaths of young seedling, root meristem, epidermal layer of developing stems and branch-primordia of developing panicles.

The protein localises to the nucleus. Probable transcription factor involved in the regulation of flowering time under long day (LD) conditions. Plays a major role as repressor of flowering. Controls flowering time by negatively regulating the expression of EHD1 and HD3A. The chain is Transcription factor GHD7 from Oryza sativa subsp. japonica (Rice).